Here is a 267-residue protein sequence, read N- to C-terminus: Flap endonuclease Xni (267 aa).

Asp-115 contributes to the Mg(2+) binding site. The region spanning 171-261 (VAPAQLVDFW…LGFNLREIRY (91 aa)) is the 5'-3' exonuclease domain. K(+)-binding residues include Leu-182, Val-193, and Ile-196. The interaction with DNA stretch occupies residues 195-200 (GIGPKT).

Belongs to the Xni family. Requires Mg(2+) as cofactor. K(+) is required as a cofactor.

Functionally, has flap endonuclease activity. During DNA replication, flap endonucleases cleave the 5'-overhanging flap structure that is generated by displacement synthesis when DNA polymerase encounters the 5'-end of a downstream Okazaki fragment. The protein is Flap endonuclease Xni of Aeromonas hydrophila subsp. hydrophila (strain ATCC 7966 / DSM 30187 / BCRC 13018 / CCUG 14551 / JCM 1027 / KCTC 2358 / NCIMB 9240 / NCTC 8049).